A 429-amino-acid polypeptide reads, in one-letter code: Serine--tRNA ligase (429 aa).

An L-serine-binding site is contributed by 229–231 (TAE). ATP is bound at residue 260–262 (RSE). Residue glutamate 283 participates in L-serine binding. Position 347–350 (347–350 (EISS)) interacts with ATP. Serine 383 serves as a coordination point for L-serine.

The protein belongs to the class-II aminoacyl-tRNA synthetase family. Type-1 seryl-tRNA synthetase subfamily. As to quaternary structure, homodimer. The tRNA molecule binds across the dimer.

It is found in the cytoplasm. The enzyme catalyses tRNA(Ser) + L-serine + ATP = L-seryl-tRNA(Ser) + AMP + diphosphate + H(+). The catalysed reaction is tRNA(Sec) + L-serine + ATP = L-seryl-tRNA(Sec) + AMP + diphosphate + H(+). It participates in aminoacyl-tRNA biosynthesis; selenocysteinyl-tRNA(Sec) biosynthesis; L-seryl-tRNA(Sec) from L-serine and tRNA(Sec): step 1/1. Catalyzes the attachment of serine to tRNA(Ser). Is also able to aminoacylate tRNA(Sec) with serine, to form the misacylated tRNA L-seryl-tRNA(Sec), which will be further converted into selenocysteinyl-tRNA(Sec). The polypeptide is Serine--tRNA ligase (Orientia tsutsugamushi (strain Ikeda) (Rickettsia tsutsugamushi)).